The chain runs to 122 residues: Ribonuclease P protein component (122 aa).

This sequence belongs to the RnpA family. In terms of assembly, consists of a catalytic RNA component (M1 or rnpB) and a protein subunit.

The enzyme catalyses Endonucleolytic cleavage of RNA, removing 5'-extranucleotides from tRNA precursor.. Its function is as follows. RNaseP catalyzes the removal of the 5'-leader sequence from pre-tRNA to produce the mature 5'-terminus. It can also cleave other RNA substrates such as 4.5S RNA. The protein component plays an auxiliary but essential role in vivo by binding to the 5'-leader sequence and broadening the substrate specificity of the ribozyme. The chain is Ribonuclease P protein component from Shouchella clausii (strain KSM-K16) (Alkalihalobacillus clausii).